A 139-amino-acid polypeptide reads, in one-letter code: Nucleoside diphosphate kinase (139 aa).

Residues Lys12, Phe60, Arg88, Thr94, Arg105, and Asn115 each coordinate ATP. Residue His118 is the Pros-phosphohistidine intermediate of the active site.

Belongs to the NDK family. In terms of assembly, homotetramer. Mg(2+) serves as cofactor.

It is found in the cytoplasm. It catalyses the reaction a 2'-deoxyribonucleoside 5'-diphosphate + ATP = a 2'-deoxyribonucleoside 5'-triphosphate + ADP. The catalysed reaction is a ribonucleoside 5'-diphosphate + ATP = a ribonucleoside 5'-triphosphate + ADP. Its function is as follows. Major role in the synthesis of nucleoside triphosphates other than ATP. The ATP gamma phosphate is transferred to the NDP beta phosphate via a ping-pong mechanism, using a phosphorylated active-site intermediate. The protein is Nucleoside diphosphate kinase of Caldanaerobacter subterraneus subsp. tengcongensis (strain DSM 15242 / JCM 11007 / NBRC 100824 / MB4) (Thermoanaerobacter tengcongensis).